A 434-amino-acid chain; its full sequence is 3-phosphoshikimate 1-carboxyvinyltransferase (434 aa).

Positions 22, 23, and 27 each coordinate 3-phosphoshikimate. A phosphoenolpyruvate-binding site is contributed by lysine 22. 2 residues coordinate phosphoenolpyruvate: glycine 93 and arginine 121. Positions 168, 169, 170, 199, 320, and 347 each coordinate 3-phosphoshikimate. Glutamine 170 serves as a coordination point for phosphoenolpyruvate. Aspartate 320 (proton acceptor) is an active-site residue. Residues arginine 351, arginine 394, and lysine 419 each contribute to the phosphoenolpyruvate site.

It belongs to the EPSP synthase family. As to quaternary structure, monomer.

It localises to the cytoplasm. It catalyses the reaction 3-phosphoshikimate + phosphoenolpyruvate = 5-O-(1-carboxyvinyl)-3-phosphoshikimate + phosphate. Its pathway is metabolic intermediate biosynthesis; chorismate biosynthesis; chorismate from D-erythrose 4-phosphate and phosphoenolpyruvate: step 6/7. Catalyzes the transfer of the enolpyruvyl moiety of phosphoenolpyruvate (PEP) to the 5-hydroxyl of shikimate-3-phosphate (S3P) to produce enolpyruvyl shikimate-3-phosphate and inorganic phosphate. The protein is 3-phosphoshikimate 1-carboxyvinyltransferase of Paraburkholderia phytofirmans (strain DSM 17436 / LMG 22146 / PsJN) (Burkholderia phytofirmans).